Reading from the N-terminus, the 352-residue chain is Molybdenum import ATP-binding protein ModC (352 aa).

The region spanning 1–229 (MLELNFSQTL…SVMNPWLPKE (229 aa)) is the ABC transporter domain. An ATP-binding site is contributed by 31 to 38 (GVSGAGKT). The Mop domain occupies 289 to 352 (QTSIRNVLRA…AQIKSVSITA (64 aa)).

The protein belongs to the ABC transporter superfamily. Molybdate importer (TC 3.A.1.8) family. In terms of assembly, the complex is composed of two ATP-binding proteins (ModC), two transmembrane proteins (ModB) and a solute-binding protein (ModA).

Its subcellular location is the cell inner membrane. The enzyme catalyses molybdate(out) + ATP + H2O = molybdate(in) + ADP + phosphate + H(+). Part of the ABC transporter complex ModABC involved in molybdenum import. Responsible for energy coupling to the transport system. The chain is Molybdenum import ATP-binding protein ModC from Escherichia coli O6:H1 (strain CFT073 / ATCC 700928 / UPEC).